Here is a 91-residue protein sequence, read N- to C-terminus: MAMNLPADNEGKIKLAMSILVTIINDTGVPRNIRRAAANALTHLRDPRLSPAVRAANAISALEEVSQDPNMPFYARTRIWQVITILETVRD.

It belongs to the UPF0147 family.

The polypeptide is UPF0147 protein APE_2336a (Aeropyrum pernix (strain ATCC 700893 / DSM 11879 / JCM 9820 / NBRC 100138 / K1)).